Here is a 77-residue protein sequence, read N- to C-terminus: U8-hexatoxin-Mg1a (77 aa).

An N-terminal signal peptide occupies residues Met1–Ala22. The propeptide occupies Tyr23–Arg43. 3 disulfide bridges follow: Cys46/Cys60, Cys53/Cys65, and Cys59/Cys76.

As to expression, expressed by the venom gland.

It localises to the secreted. Functionally, intrathorax injection into crickets causes paralysis prolonged for more than 60 minutes, followed by recovery. In Macrothele gigas (Japanese funnel web spider), this protein is U8-hexatoxin-Mg1a.